Here is a 455-residue protein sequence, read N- to C-terminus: Probable cytosolic iron-sulfur protein assembly protein 1 (455 aa).

WD repeat units lie at residues 31–70 (GHSS…TTSA), 90–129 (GHQR…DGSS), 163–202 (GHES…EFEC), 208–247 (EHSQ…DWFC), 253–292 (GHES…QCEA), 318–365 (YHDR…DEKS), and 380–453 (HASA…YAAT).

This sequence belongs to the WD repeat CIA1 family.

In terms of biological role, essential component of the cytosolic iron-sulfur (Fe/S) protein assembly machinery. Required for the maturation of extramitochondrial Fe/S proteins. This Mycosarcoma maydis (Corn smut fungus) protein is Probable cytosolic iron-sulfur protein assembly protein 1.